A 658-amino-acid polypeptide reads, in one-letter code: Interferon-induced GTP-binding protein Mx1 (658 aa).

N-acetylmethionine is present on methionine 1. The interval 1–20 is disordered; sequence MVNSKGKITDSDPGSSHLLL. One can recognise a Dynamin-type G domain in the interval 65-338; that stretch reads DLALPAIAVI…LITHICKTLP (274 aa). Residues 75–82 form a G1 motif region; sequence GDQSSGKS. Residue 75-82 coordinates GTP; it reads GDQSSGKS. A G2 motif region spans residues 100–102; sequence VTR. The G3 motif stretch occupies residues 176 to 179; the sequence is DLPG. GTP contacts are provided by residues 176–180 and 245–248; these read DLPGI and TKPD. The interval 245-248 is G4 motif; that stretch reads TKPD. Residues 277 to 280 are G5 motif; it reads KCRG. Positions 339-364 are bundle signaling element (BSE); the sequence is LLENQIKENYEKITEELQKYGSDVPE. Residues 364 to 531 form a middle domain region; sequence EEEHEKMFFL…HFQMEQIVYC (168 aa). Positions 365–628 are stalk; it reads EEHEKMFFLI…KDTHNWLLKE (264 aa). Positions 551–554 are critical for lipid-binding; it reads KDRK. Residues 570 to 658 enclose the GED domain; sequence LSDIFEHLLA…ARRRLAKFPG (89 aa).

The protein belongs to the TRAFAC class dynamin-like GTPase superfamily. Dynamin/Fzo/YdjA family. In terms of assembly, homooligomer. Oligomerizes into multimeric filamentous or ring-like structures by virtue of its stalk domain. Oligomerization is critical for GTPase activity, protein stability, and recognition of viral target structures. Interacts with TRPC1, TRPC3, TRPC4, TRPC5, TRPC6 and TRPC7. Interacts with HSPA5. Interacts with TUBB/TUBB5. Interacts with DDX39A and DDX39B. In terms of processing, ISGylated.

The protein resides in the cytoplasm. The protein localises to the endoplasmic reticulum membrane. Its subcellular location is the perinuclear region. Interferon-induced dynamin-like GTPase with antiviral activity. The chain is Interferon-induced GTP-binding protein Mx1 (MX1) from Eumetopias jubatus (Steller sea lion).